Consider the following 1219-residue polypeptide: MFGAGDEDDTDFLSPSGGARLASLFGLDQAAAGHGNEFFQYTAPKQPKKGQGTAATGNQATPKTAPATMSTPTILVATAVHAYRYTNGQYVKQGKFGAAVLGNHTAREYRILLYISQQQPVTVARIHVNFELMVRPNNYSTFYDDQRQNWSIMFESEKAAVEFNKQVCIAKCNSTSSLDAVLSQDLIVADGPAVEVGDSLEVAYTGWLFQNHVLGQVFDSTANKDKLLRLKLGSGKVIKGWEDGMLGMKKGGKRLLIVPPACAVGSEGVIGWTQATDSILVFEVEVRRVKFARDSGSDGHSVSSRDSAAPSPIPGADNLSADPVVSPPTSIPFKSGEPALRTKSNSLSEQLAINTSPDAVKAKLISRMAKMGQPMLPILPPQLDSNDSEIEDVNTLQGGGQPVVTPSVQPSLHPAHPALPQMTSQAPQPSVTGLQAPSAALMQVSSLDSHSAVSGNAQSFQPYAGMQAYAYPQASAVTSQLQPVRPLYPAPLSQPPHFQGSGDMASFLMTEARQHNTEIRMAVSKVADKMDHLMTKVEELQKHSAGNSMLIPSMSVTMETSMIMSNIQRIIQENERLKQEILEKSNRIEEQNDKISELIERNQRYVEQSNLMMEKRNNSLQTATENTQARVLHAEQEKAKVTEELAAATAQVSHLQLKMTAHQKKETELQMQLTESLKETDLLRGQLTKVQAKLSELQETSEQAQSKFKSEKQNRKQLELKVTSLEEELTDLRVEKESLEKNLSERKKKSAQERSQAEEEIDEIRKSYQEELDKLRQLLKKTRVSTDQAAAEQLSLVQAELQTQWEAKCEHLLASAKDEHLQQYQEVCAQRDAYQQKLVQLQEKCLALQAQITALTKQNEQHIKELEKNKSQMSGVEAAASDPSEKVKKIMNQVFQSLRREFELEESYNGRTILGTIMNTIKMVTLQLLNQQEQEKEESSSEEEEEKAEERPRRPSQEQSASASSGQPQAPLNRERPESPMVPSEQVVEEAVPLPPQALTTSQDGHRRKGDSEAEALSEIKDGSLPPELSCIPSHRVLGPPTSIPPEPLGPVSMDSECEESLAASPMAAKPDNPSGKVCVREVAPDGPLQESSTRLSLTSDPEEGDPLALGPESPGEPQPPQLKKDDVTSSTGPHKELSSTEAGSTVAGAALRPSHHSQRSSLSGDEEDELFKGATLKALRPKAQPEEEDEDEVSMKGRPPPTPLFGDDDDDDDIDWLG.

N-acetylmethionine is present on Met-1. Ser-14 and Ser-23 each carry phosphoserine. The disordered stretch occupies residues Tyr-41–Pro-66. Residues Thr-53–Pro-66 are compositionally biased toward polar residues. Positions Pro-72–Ile-169 are important for function in growth cone organization. Lys-92 bears the N6-acetyllysine mark. The PPIase FKBP-type domain occupies Gly-197–Lys-290. The segment at Asp-294–Glu-349 is disordered. Phosphoserine is present on residues Ser-307, Ser-311, Ser-326, Ser-344, Ser-346, and Ser-356. The interval Pro-381–Gly-433 is disordered. The span at Gln-421–Gly-433 shows a compositional bias: polar residues. Coiled-coil stretches lie at residues Ala-522 to Ala-789, Asp-818 to Ala-878, and Thr-925 to Arg-951. Ser-619 carries the post-translational modification Phosphoserine. The tract at residues Leu-739–Ile-761 is disordered. Residues Gln-931–Gly-1219 are disordered. Phosphoserine occurs at positions 939, 940, 941, and 956. Over residues Gln-957–Pro-971 the composition is skewed to low complexity. Phosphoserine is present on residues Ser-979, Ser-1024, Ser-1056, Ser-1061, Ser-1065, and Ser-1097. The span at Gln-1090–Ser-1100 shows a compositional bias: polar residues. Phosphothreonine is present on Thr-1099. Ser-1114 carries the post-translational modification Phosphoserine. The segment covering Leu-1123–Ser-1139 has biased composition (basic and acidic residues). A phosphoserine mark is found at Ser-1158, Ser-1161, Ser-1162, Ser-1164, and Ser-1195. At Thr-1203 the chain carries Phosphothreonine. The segment covering Gly-1207–Gly-1219 has biased composition (acidic residues).

This sequence belongs to the FKBP-type PPIase family. As to quaternary structure, interacts with WIP and actin. Interacts with TBC1D23.

The protein resides in the cytoplasm. It is found in the cell projection. The protein localises to the axon. It localises to the early endosome. May be involved in the cytoskeletal organization of neuronal growth cones. Seems to be inactive as a PPIase. Involved in the transport of early endosomes at the level of transition between microfilament-based and microtubule-based movement. This chain is FK506-binding protein 15 (FKBP15), found in Homo sapiens (Human).